The primary structure comprises 428 residues: Elongation factor 1-alpha (428 aa).

The tr-type G domain occupies 5–215; it reads KPHVNIVFIG…ALDQIPEPPK (211 aa). The G1 stretch occupies residues 14 to 21; it reads GHVDHGKS. 14–21 provides a ligand contact to GTP; it reads GHVDHGKS. Serine 21 contributes to the Mg(2+) binding site. Positions 68 to 72 are G2; that stretch reads GITID. The tract at residues 89–92 is G3; sequence DAPG. Residues 89-93 and 144-147 contribute to the GTP site; these read DAPGH and NKMD. The tract at residues 144 to 147 is G4; that stretch reads NKMD. Positions 181-183 are G5; that stretch reads SAW.

This sequence belongs to the TRAFAC class translation factor GTPase superfamily. Classic translation factor GTPase family. EF-Tu/EF-1A subfamily.

The protein resides in the cytoplasm. The enzyme catalyses GTP + H2O = GDP + phosphate + H(+). Its function is as follows. GTP hydrolase that promotes the GTP-dependent binding of aminoacyl-tRNA to the A-site of ribosomes during protein biosynthesis. The chain is Elongation factor 1-alpha from Thermococcus gammatolerans (strain DSM 15229 / JCM 11827 / EJ3).